The sequence spans 3033 residues: Genome polyprotein (3033 aa).

Residue S2 is modified to N-acetylserine; by host. The segment at 2–23 (STNPKPQRKTKRNTNRRPEDVK) is interaction with STAT1. The interval 2-58 (STNPKPQRKTKRNTNRRPEDVKFPGGGQIVGGVYLLPRRGPRLGVRTTRKTSERSQP) is interaction with EIF2AK2/PKR. Positions 2-59 (STNPKPQRKTKRNTNRRPEDVKFPGGGQIVGGVYLLPRRGPRLGVRTTRKTSERSQPR) are interaction with DDX3X. The interval 2 to 75 (STNPKPQRKT…PKDRRSTGKA (74 aa)) is disordered. Topologically, residues 2 to 168 (STNPKPQRKT…EDGVNYATGN (167 aa)) are cytoplasmic. 2 short sequence motifs (nuclear localization signal) span residues 5-13 (PKPQRKTKR) and 38-43 (PRRGPR). Residues 7–16 (PQRKTKRNTN) are compositionally biased toward basic residues. The segment covering 32–47 (GGVYLLPRRGPRLGVR) has biased composition (low complexity). S53 carries the phosphoserine; by host modification. 2 consecutive short sequence motifs (nuclear localization signal) follow at residues 58–64 (PRGRRQP) and 66–71 (PKDRRS). A Phosphoserine; by host modification is found at S99. Positions 112–152 (PRHRSRNVGKVIDTLTCGFADLMGYIPVVGAPLSGAARAVA) are important for endoplasmic reticulum and mitochondrial localization. S116 bears the Phosphoserine; by host PKA mark. An interaction with APOA2 region spans residues 122 to 173 (VIDTLTCGFADLMGYIPVVGAPLSGAARAVAHGVRVLEDGVNYATGNLPGFP). The segment at 164-167 (YATG) is important for lipid droplets localization. Residues 169 to 189 (LPGFPFSIFLLALLSCITVPV) traverse the membrane as a helical segment. The propeptide at 178–191 (LLALLSCITVPVSA) is ER anchor for the core protein, removed in mature form by host signal peptidase. At 190 to 358 (SAAQVKNTSS…SGAHWGVMFG (169 aa)) the chain is on the lumenal side. Residues N196, N209, and N234 are each glycosylated (N-linked (GlcNAc...) asparagine; by host). The tract at residues 265 to 296 (VVMSATFCSALYVGDLCGGVMLAAQVFIVSPQ) is important for fusion. N305 carries N-linked (GlcNAc...) asparagine; by host glycosylation. A helical membrane pass occupies residues 359–379 (LAYFSMQGAWAKVIVILLLAA). At 380 to 729 (GVDAGTTTVG…WEWVVLLFLL (350 aa)) the chain is on the lumenal side. Residues 385–411 (TTTVGGAVARSTNVIAGVFSHGPQQNI) form an HVR1 region. 4 N-linked (GlcNAc...) (high mannose) asparagine; by host glycosylation sites follow: N417, N423, N430, and N448. 4 cysteine pairs are disulfide-bonded: C429/C554, C452/C459, C488/C496, and C505/C510. An N-linked (GlcNAc...) (high mannose) asparagine; by host glycan is attached at N477. The CD81-binding 1 stretch occupies residues 484–496 (MRPYCWHYPPKPC). The CD81-binding 2 stretch occupies residues 524 to 555 (RGVPTYTWGENETDVFLLNSTRPPQGSWFGCT). N534, N542, and N558 each carry an N-linked (GlcNAc...) (high mannose) asparagine; by host glycan. An intrachain disulfide couples C566 to C571. An N-linked (GlcNAc...) (high mannose) asparagine; by host glycan is attached at N578. Disulfide bonds link C585/C589, C601/C624, and C611/C648. N-linked (GlcNAc...) (high mannose) asparagine; by host glycosylation is found at N627 and N649. A disulfide bond links C656 and C681. Positions 664–675 (SQLSPLLHSTTE) are EIF2AK2/eIF2-alpha phosphorylation homology domain (PePHD). A helical membrane pass occupies residues 730–750 (LADARVCACLWMLILLGQAEA). The Lumenal portion of the chain corresponds to 751 to 761 (ALEKLVVLHAA). The helical transmembrane segment at 762–782 (SAANCHGLLYFAIFFVAAWHI) threads the bilayer. Topologically, residues 783 to 785 (RGR) are cytoplasmic. A helical transmembrane segment spans residues 786–807 (VVPLTTYCLTGLWPFCLLLMAL). Topologically, residues 808–817 (PRQAYAYDAP) are lumenal. The helical transmembrane segment at 818–838 (VHGQIGVGLLILITLFTLTPG) threads the bilayer. The Cytoplasmic portion of the chain corresponds to 839-842 (YKTL). The chain crosses the membrane as a helical span at residues 843–863 (LGQCLWWLCYLLTLGEAMIQE). The Lumenal segment spans residues 864 to 885 (WVPPMQVRGGRDGIAWAVTIFC). The chain crosses the membrane as a helical span at residues 886–906 (PGVVFDITKWLLALLGPAYLL). The Peptidase C18 domain maps to 907–1030 (RAALTHVPYF…GYTSKGWKLL (124 aa)). Residues 907–1661 (RAALTHVPYF…CMQADLEVMT (755 aa)) are Cytoplasmic-facing. Residues 908–1210 (AALTHVPYFV…PVETLDVVTR (303 aa)) form a protease NS2-3 region. C926 carries the S-palmitoyl cysteine; by host lipid modification. The tract at residues 933-953 (AGGRYVQVALLALGRWTGTYI) is interaction with human SCPS1. Catalysis depends on for protease NS2 activity; shared with dimeric partner residues H956, E976, and C997. A Peptidase S29 domain is found at 1031 to 1212 (APITAYAQQT…ETLDVVTRSP (182 aa)). Residues H1087 and D1111 each act as charge relay system; for serine protease NS3 activity in the active site. Zn(2+) contacts are provided by C1127 and C1129. S1169 acts as the Charge relay system; for serine protease NS3 activity in catalysis. C1175 and H1179 together coordinate Zn(2+). The 153-residue stretch at 1221 to 1373 (PAVPQTYQVG…PDIEEVGLGR (153 aa)) folds into the Helicase ATP-binding domain. 1234–1241 (APTGSGKS) contacts ATP. S1241 and E1321 together coordinate Mg(2+). Residues 1320 to 1323 (DECH) carry the DECH box motif. A disordered region spans residues 1481 to 1501 (VPQDAVSRSQRRGRTGRGRQG). Positions 1490-1501 (QRRGRTGRGRQG) are RNA-binding. The helical transmembrane segment at 1662-1682 (STWVLAGGVLAAVAAYCLATG) threads the bilayer. The interval 1683 to 1694 (CVSIIGRLHVNQ) is NS3-binding. Residues 1683–1809 (CVSIIGRLHV…ALTSPLSTST (127 aa)) lie on the Cytoplasmic side of the membrane. The helical transmembrane segment at 1810-1830 (TILLNIMGGWLASQIAPPAGA) threads the bilayer. At 1831–1832 (TG) the chain is on the lumenal side. Residues 1833 to 1853 (FVVSGLVGAAVGSIGLGKVLV) form a helical membrane-spanning segment. Residues 1837 to 1865 (GLVGAAVGSIGLGKVLVDILAGYGAGISG) are glycine zipper. Position 1854 (D1854) is a topological domain, cytoplasmic. A helical membrane pass occupies residues 1855 to 1875 (ILAGYGAGISGALVAFKIMSG). The Lumenal segment spans residues 1876–1885 (EKPSMEDVIN). A helical transmembrane segment spans residues 1886–1906 (LLPGILSPGALVVGVICAAIL). Over 1907-1976 (RRHVGPGEGA…WITEDCPIPC (70 aa)) the chain is Cytoplasmic. Residue C1972 is the site of S-palmitoyl cysteine; by host attachment. Residue C1976 is the site of S-palmitoyl cysteine; by host; partial attachment. An intramembrane segment occupies 1977–2007 (SGSWLRDVWDWVCTILTDFKNWLTSKLFPKL). Residues 1982–2002 (RDVWDWVCTILTDFKNWLTSK) form a membrane-binding region. The Cytoplasmic portion of the chain corresponds to 2008–3012 (PGLPFISCQK…FHSVSRARPR (1005 aa)). Residues 2009–2225 (GLPFISCQKG…RATCTTHSNT (217 aa)) form a D1; RNA-binding region. The Zn(2+) site is built by C2015, C2033, C2035, and C2056. Y2069 carries the phosphotyrosine; by host modification. The interval 2124–2212 (EFFSWVDGVQ…ASSSVSQLSA (89 aa)) is FKBP8-binding. The interval 2124–2332 (EFFSWVDGVQ…PTPPPRRRRT (209 aa)) is transcriptional activation. An interaction with non-structural protein 4A region spans residues 2139 to 2143 (PTPKP). Positions 2192–2213 (RRLARGSPPSEASSSVSQLSAP) are disordered. A compositionally biased stretch (low complexity) spans 2196-2213 (RGSPPSEASSSVSQLSAP). S2198 is subject to Phosphoserine; by host; in p56. S2201 is modified (phosphoserine; by host; in p58). At S2205 the chain carries Phosphoserine; by host; in p56 and p58, regulates intracellular NS5A distribution. Residues S2208, S2211, and S2214 each carry the phosphoserine; by host; in p58 modification. An ISDR region spans residues 2210 to 2249 (LSAPSLRATCTTHSNTYDVDMVDANLLMEGGVAQTEPESR). Residues 2214-2275 (SLRATCTTHS…LEPSIPSECM (62 aa)) are interaction with EIF2AK2/PKR. Residues 2227-2315 (DVDMVDANLL…YQPPTVAGCA (89 aa)) are D2. The tract at residues 2228–2315 (VDMVDANLLM…YQPPTVAGCA (88 aa)) is disordered. Positions 2249-2306 (RVPVLDFLEPMAEEESDLEPSIPSECMLPRSGFPRALPAWARPDYNPPLVESWRRPDY) are NS4B-binding. The interval 2281–2297 (FPRALPAWARPDYNPPL) is interaction with human PPIA/CYPA. Positions 2316-2326 (LPPPKKAPTPP) are enriched in pro residues. The SH3-binding signature appears at 2322–2325 (APTP). T2324 carries the phosphothreonine; by host modification. Residues 2326-2334 (PPRRRRTVG) carry the Nuclear localization signal motif. The tract at residues 2329-2442 (RRRTVGLSES…SEEDDTTVCC (114 aa)) is D3. An interaction with host IFI27 region spans residues 2336-2447 (SESTISEALQ…TTVCCSMSYS (112 aa)). A Glycyl lysine isopeptide (Lys-Gly) (interchain with G-Cter in ubiquitin) cross-link involves residue K2350. The tract at residues 2352–2432 (FGQPPSSGDA…GSGSGSWSTC (81 aa)) is disordered. The segment covering 2355 to 2379 (PPSSGDAGSSTGAGAAESGGPTSPG) has biased composition (low complexity). The interval 2358–2381 (SGDAGSSTGAGAAESGGPTSPGEP) is V3. The tract at residues 2371 to 2439 (ESGGPTSPGE…STCSEEDDTT (69 aa)) is interaction with host VAPB. The segment covering 2398–2408 (EPGDPDLESDQ) has biased composition (acidic residues). Over residues 2417 to 2426 (GGGVAPGSGS) the composition is skewed to gly residues. The RdRp catalytic domain maps to 2656–2774 (PMGFSYDTRC…ISESQGTEED (119 aa)). 3 residues coordinate Mg(2+): D2662, D2760, and D2761. Residues 3013 to 3033 (SLLFGLLLLFVGVGLFLLPAR) traverse the membrane as a helical segment.

Belongs to the hepacivirus polyprotein family. As to quaternary structure, homooligomer. Interacts with E1 (via C-terminus). Interacts with the non-structural protein 5A. Interacts (via N-terminus) with host STAT1 (via SH2 domain); this interaction results in decreased STAT1 phosphorylation and ubiquitin-mediated proteasome-dependent STAT1 degradation, leading to decreased IFN-stimulated gene transcription. Interacts with host STAT3; this interaction constitutively activates STAT3. Interacts with host LTBR receptor. Interacts with host TNFRSF1A receptor and possibly induces apoptosis. Interacts with host HNRPK. Interacts with host YWHAE. Interacts with host UBE3A/E6AP. Interacts with host DDX3X. Interacts with host APOA2. Interacts with host RXRA protein. Interacts with host SP110 isoform 3/Sp110b; this interaction sequesters the transcriptional corepressor SP110 away from the nucleus. Interacts with host CREB3 nuclear transcription protein; this interaction triggers cell transformation. Interacts with host ACY3. Interacts with host C1QR1. Interacts with host RBM24; this interaction, which enhances the interaction of the mature core protein with 5'-UTR, may inhibit viral translation and favor replication. Interacts (via N-terminus) with host EIF2AK2/PKR (via N-terminus); this interaction induces the autophosphorylation of EIF2AK2. Part of the viral assembly initiation complex composed of NS2, E1, E2, NS3, NS4A, NS5A and the mature core protein. In terms of assembly, forms a heterodimer with envelope glycoprotein E2. Interacts with mature core protein. Interacts with protease NS2. The heterodimer E1/E2 interacts with host CLDN1; this interaction plays a role in viral entry into host cell. Interacts with host SPSB2 (via C-terminus). Part of the viral assembly initiation complex composed of NS2, E1, E2, NS3, NS4A, NS5A and the mature core protein. Forms a heterodimer with envelope glycoprotein E1. Interacts with host CD81 and SCARB1 receptors; these interactions play a role in viral entry into host cell. Interacts with host EIF2AK2/PKR; this interaction inhibits EIF2AK2 and probably allows the virus to evade the innate immune response. Interacts with host CD209/DC-SIGN and CLEC4M/DC-SIGNR. Interact with host SPCS1; this interaction is essential for viral particle assembly. Interacts with protease NS2. The heterodimer E1/E2 interacts with host CLDN1; this interaction plays a role in viral entry into host cell. Part of the viral assembly initiation complex composed of NS2, E1, E2, NS3, NS4A, NS5A and the mature core protein. Interacts with host SLC3A2/4F2hc; the interaction may facilitate viral entry into host cell. As to quaternary structure, homohexamer. Homoheptamer. Interacts with protease NS2. In terms of assembly, homodimer. Interacts with host SPCS1; this interaction is essential for viral particle assembly. Interacts with envelope glycoprotein E1. Interacts with envelope glycoprotein E2. Interacts with viroporin p7. Interacts with serine protease/helicase NS3. Part of the replication complex composed of NS2, NS3, NS4A, NS4B, NS5A and the RNA-directed RNA polymerase embedded in an ER-derived membranous web. Part of the viral assembly initiation complex composed of NS2, E1, E2, NS3, NS4A, NS5A and the mature core protein. Interacts with host NEURL3; this interaction prevents E1 binding to glycoprotein E2. Interacts with protease NS2. Interacts with non-structural protein 4A; this interaction stabilizes the folding of NS3 serine protease. NS3-NS4A interaction is essential for NS3 activation and allows membrane anchorage of the latter. NS3/NS4A complex also prevents phosphorylation of host IRF3, thus preventing the establishment of dsRNA induced antiviral state. Interacts with host MAVS; this interaction leads to the cleavage and inhibition of host MAVS. Interacts with host TICAM1; this interaction leads to the cleavage and inhibition of host TICAM1. Interacts with host TANK-binding kinase/TBK1; this interaction results in the inhibition of the association between TBK1 and IRF3, which leads to the inhibition of IRF3 activation. Interacts with host RBM24. Part of the replication complex composed of NS2, NS3, NS4A, NS4B, NS5A and the RNA-directed RNA polymerase embedded in an ER-derived membranous web. Part of the viral assembly initiation complex composed of NS2, E1, E2, NS3, NS4A, NS5A and the mature core protein. As to quaternary structure, interacts with NS3 serine protease; this interaction stabilizes the folding of NS3 serine protease. NS3-NS4A interaction is essential for NS3 activation and allows membrane anchorage of the latter. Interacts with non-structural protein 5A (via N-terminus). Part of the replication complex composed of NS2, NS3, NS4A, NS4B, NS5A and the RNA-directed RNA polymerase embedded in an ER-derived membranous web. Part of the viral assembly initiation complex composed of NS2, E1, E2, NS3, NS4A, NS5A and the mature core protein. In terms of assembly, homomultimer. Interacts with non-structural protein NS5A. Interacts with host PLA2G4C; this interaction likely initiates the recruitment of replication complexes to lipid droplets. Interacts with host STING; this interaction disrupts the interaction between STING and TBK1 thereby suppressing the interferon signaling. Part of the replication complex composed of NS2, NS3, NS4A, NS4B, NS5A and the RNA-directed RNA polymerase embedded in an ER-derived membranous web. Monomer. Homodimer; dimerization is required for RNA-binding. Interacts with the mature core protein. Interacts (via N-terminus) with non-structural protein 4A. Interacts with non-structural protein 4B. Interacts (via region D2) with RNA-directed RNA polymerase. Part of the viral assembly initiation complex composed of NS2, E1, E2, NS3, NS4A, NS5A and the mature core protein. Part of the replication complex composed of NS2, NS3, NS4A, NS4B, NS5A and the RNA-directed RNA polymerase embedded in an ER-derived membranous web. Interacts with host GRB2. Interacts with host BIN1. Interacts with host PIK3R1. Interacts with host SRCAP. Interacts with host FKBP8. Interacts (via C-terminus) with host VAPB (via MSP domain). Interacts with host EIF2AK2/PKR; this interaction leads to disruption of EIF2AK2 dimerization by NS5A and probably allows the virus to evade the innate immune response. Interacts (via N-terminus) with host PACSIN2 (via N-terminus); this interaction attenuates protein kinase C alpha-mediated phosphorylation of PACSIN2 by disrupting the interaction between PACSIN2 and PRKCA. Interacts (via N-terminus) with host SRC kinase (via SH2 domain). Interacts with most Src-family kinases. Interacts with host IFI27 and SKP2; promotes the ubiquitin-mediated proteasomal degradation of NS5A. Interacts with host GPS2. Interacts with host TNFRSF21; this interaction allows the modulation by the virus of JNK, p38 MAPK, STAT3, and Akt signaling pathways in a DR6-dependent manner. Interacts (via N-terminus) with host CIDEB (via N-terminus); this interaction seems to regulate the association of HCV particles with APOE. Interacts with host CHKA/Choline Kinase-alpha; CHKA bridges host PI4KA and NS5A and potentiates NS5A-stimulated PI4KA activity, which then facilitates the targeting of the ternary complex to the ER for viral replication. Interacts with host SPSB2 (via C-terminus); this interaction targets NS5A for ubiquitination and degradation. Interacts with host RAB18; this interaction may promote the association of NS5A and other replicase components with lipid droplets. Interacts (via region D2) with host PPIA/CYPA; the interaction stimulates RNA-binding ability of NS5A and is dependent on the peptidyl-prolyl cis-trans isomerase activity of PPIA/CYPA. Interacts with host TRIM14; this interaction induces the degradation of NS5A. As to quaternary structure, homooligomer. Interacts with non-structural protein 5A. Interacts with host VAPB. Interacts with host PRK2/PKN2. Interacts with host HNRNPA1 and SEPT6; these interactions facilitate the viral replication. Part of the replication complex composed of NS2, NS3, NS4A, NS4B, NS5A and the RNA-directed RNA polymerase embedded in an ER-derived membranous web. Requires Zn(2+) as cofactor. The cofactor is Mg(2+). Post-translationally, specific enzymatic cleavages in vivo yield mature proteins. The structural proteins, core, E1, E2 and p7 are produced by proteolytic processing by host signal peptidases. The core protein is synthesized as a 23 kDa precursor which is retained in the ER membrane through the hydrophobic signal peptide. Cleavage by the signal peptidase releases the 21 kDa mature core protein. The cleavage of the core protein precursor occurs between aminoacids 176 and 188 but the exact cleavage site is not known. Some degraded forms of the core protein appear as well during the course of infection. The other proteins (p7, NS2, NS3, NS4A, NS4B, NS5A and NS5B) are cleaved by the viral proteases. Autoprocessing between NS2 and NS3 is mediated by the NS2 cysteine protease catalytic domain and regulated by the NS3 N-terminal domain. Phosphorylated by host PKC and PKA. In terms of processing, ubiquitinated; mediated by UBE3A and leading to core protein subsequent proteasomal degradation. Post-translationally, highly N-glycosylated. Palmitoylation is required for NS2/3 autoprocessing and E2 recruitment to membranes. In terms of processing, palmitoylated. This modification may play a role in its polymerization or in protein-protein interactions. Post-translationally, cleaved by host caspases which arec probably activated by the viral infection. Ubiquitinated. Ubiquitination, most probably at Lys-2350, mediated by host IFI27 and SKP2 leads to proteasomal degradation, restricting viral infection. In terms of processing, phosphorylated on serines in a basal form termed p56. p58 is a hyperphosphorylated form of p56. p56 and p58 coexist in the cell in roughly equivalent amounts. Hyperphosphorylation is dependent on the presence of NS4A. Host CSNK1A1/CKI-alpha, PI4KA or RPS6KB1 kinases may be responsible for NS5A phosphorylation. Phosphorylated NS5A is involved in viral replication. Post-translationally, tyrosine phosphorylation is essential for the interaction with host SRC. The N-terminus is phosphorylated by host PRK2/PKN2.

It is found in the host endoplasmic reticulum membrane. Its subcellular location is the host mitochondrion membrane. It localises to the virion. The protein localises to the host cytoplasm. The protein resides in the host nucleus. It is found in the host lipid droplet. Its subcellular location is the virion membrane. It localises to the host mitochondrion. The protein localises to the host cell membrane. The protein resides in the host perinuclear region. It catalyses the reaction Hydrolysis of four peptide bonds in the viral precursor polyprotein, commonly with Asp or Glu in the P6 position, Cys or Thr in P1 and Ser or Ala in P1'.. The enzyme catalyses a ribonucleoside 5'-triphosphate + H2O = a ribonucleoside 5'-diphosphate + phosphate + H(+). It carries out the reaction ATP + H2O = ADP + phosphate + H(+). The catalysed reaction is RNA(n) + a ribonucleoside 5'-triphosphate = RNA(n+1) + diphosphate. Its activity is regulated as follows. Inhibited by the antiviral drug hexamethylene amiloride. Inhibition by amantadine appears to be genotype-dependent. Also inhibited by long-alkyl-chain iminosugar derivatives. Activity is up-regulated by PRK2/PKN2-mediated phosphorylation. Packages viral RNA to form a viral nucleocapsid, and promotes virion budding. Participates in the viral particle production as a result of its interaction with the non-structural protein 5A. Binds RNA and may function as a RNA chaperone to induce the RNA structural rearrangements taking place during virus replication. Modulates viral translation initiation by interacting with viral IRES and 40S ribosomal subunit. Affects various cell signaling pathways, host immunity and lipid metabolism. Prevents the establishment of cellular antiviral state by blocking the interferon-alpha/beta (IFN-alpha/beta) and IFN-gamma signaling pathways and by blocking the formation of phosphorylated STAT1 and promoting ubiquitin-mediated proteasome-dependent degradation of STAT1. Activates STAT3 leading to cellular transformation. Regulates the activity of cellular genes, including c-myc and c-fos. May repress the promoter of p53, and sequester CREB3 and SP110 isoform 3/Sp110b in the cytoplasm. Represses cell cycle negative regulating factor CDKN1A, thereby interrupting an important check point of normal cell cycle regulation. Targets transcription factors involved in the regulation of inflammatory responses and in the immune response: suppresses NF-kappa-B activation, and activates AP-1. Binds to dendritic cells (DCs) via C1QR1, resulting in down-regulation of T-lymphocytes proliferation. Alters lipid metabolism by interacting with hepatocellular proteins involved in lipid accumulation and storage. Induces up-regulation of FAS promoter activity, and thereby contributes to the increased triglyceride accumulation in hepatocytes (steatosis). Its function is as follows. Forms a heterodimer with envelope glycoprotein E2, which mediates virus attachment to the host cell, virion internalization through clathrin-dependent endocytosis and fusion with host membrane. Fusion with the host cell is most likely mediated by both E1 and E2, through conformational rearrangements of the heterodimer required for fusion rather than a classical class II fusion mechanism. E1/E2 heterodimer binds host apolipoproteins such as APOB and APOE thereby forming a lipo-viro-particle (LVP). APOE associated to the LVP allows the initial virus attachment to cell surface receptors such as the heparan sulfate proteoglycans (HSPGs), syndecan-1 (SDC1), syndecan-1 (SDC2), the low-density lipoprotein receptor (LDLR) and scavenger receptor class B type I (SCARB1). The cholesterol transfer activity of SCARB1 allows E2 exposure and binding of E2 to SCARB1 and the tetraspanin CD81. E1/E2 heterodimer binding on CD81 activates the epithelial growth factor receptor (EGFR) signaling pathway. Diffusion of the complex E1-E2-EGFR-SCARB1-CD81 to the cell lateral membrane allows further interaction with Claudin 1 (CLDN1) and occludin (OCLN) to finally trigger HCV entry. Functionally, forms a heterodimer with envelope glycoprotein E1, which mediates virus attachment to the host cell, virion internalization through clathrin-dependent endocytosis and fusion with host membrane. Fusion with the host cell is most likely mediated by both E1 and E2, through conformational rearrangements of the heterodimer required for fusion rather than a classical class II fusion mechanism. The interaction between envelope glycoprotein E2 and host apolipoprotein E/APOE allows the proper assembly, maturation and infectivity of the viral particles. This interaction is probably promoted via the up-regulation of cellular autophagy by the virus. E1/E2 heterodimer binds host apolipoproteins such as APOB and APOE thereby forming a lipo-viro-particle (LVP). APOE associated to the LVP allows the initial virus attachment to cell surface receptors such as the heparan sulfate proteoglycans (HSPGs), syndecan-1 (SDC1), syndecan-1 (SDC2), the low-density lipoprotein receptor (LDLR) and scavenger receptor class B type I (SCARB1). The cholesterol transfer activity of SCARB1 allows E2 exposure and binding of E2 to SCARB1 and the tetraspanin CD81. E1/E2 heterodimer binding on CD81 activates the epithelial growth factor receptor (EGFR) signaling pathway. Diffusion of the complex E1-E2-EGFR-SCARB1-CD81 to the cell lateral membrane allows further interaction with Claudin 1 (CLDN1) and occludin (OCLN) to finally trigger HCV entry. Inhibits host EIF2AK2/PKR activation, preventing the establishment of an antiviral state. Viral ligand for CD209/DC-SIGN and CLEC4M/DC-SIGNR, which are respectively found on dendritic cells (DCs), and on liver sinusoidal endothelial cells and macrophage-like cells of lymph node sinuses. These interactions allow the capture of circulating HCV particles by these cells and subsequent facilitated transmission to permissive cells such as hepatocytes and lymphocyte subpopulations. The interaction between E2 and host amino acid transporter complex formed by SLC3A2 and SLC7A5/LAT1 may facilitate viral entry into host cell. In terms of biological role, ion channel protein that acts as a viroporin and plays an essential role in the assembly, envelopment and secretion of viral particles. Regulates the host cell secretory pathway, which induces the intracellular retention of viral glycoproteins and favors assembly of viral particles. Creates a pore in acidic organelles and releases Ca(2+) and H(+) in the cytoplasm of infected cells, leading to a productive viral infection. High levels of cytoplasmic Ca(2+) may trigger membrane trafficking and transport of viral ER-associated proteins to viroplasms, sites of viral genome replication. This ionic imbalance induces the assembly of the inflammasome complex, which triggers the maturation of pro-IL-1beta into IL-1beta through the action of caspase-1. Targets also host mitochondria and induces mitochondrial depolarization. In addition of its role as a viroporin, acts as a lipid raft adhesion factor. Cysteine protease required for the proteolytic auto-cleavage between the non-structural proteins NS2 and NS3. The N-terminus of NS3 is required for the function of NS2 protease (active region NS2-3). Promotes the initiation of viral particle assembly by mediating the interaction between structural and non-structural proteins. Its function is as follows. Displays three enzymatic activities: serine protease with a chymotrypsin-like fold, NTPase and RNA helicase. NS3 serine protease, in association with NS4A, is responsible for the cleavages of NS3-NS4A, NS4A-NS4B, NS4B-NS5A and NS5A-NS5B. The NS3/NS4A complex prevents phosphorylation of host IRF3, thus preventing the establishment of dsRNA induced antiviral state. The NS3/NS4A complex induces host amino acid transporter component SLC3A2, thus contributing to HCV propagation. NS3 RNA helicase binds to RNA and unwinds both dsDNA and dsRNA in the 3' to 5' direction, and likely resolves RNA complicated stable secondary structures in the template strand. Binds a single ATP and catalyzes the unzipping of a single base pair of dsRNA. Inhibits host antiviral proteins TBK1 and IRF3 thereby preventing the establishment of an antiviral state. Cleaves host MAVS/CARDIF thereby preventing the establishment of an antiviral state. Cleaves host TICAM1/TRIF, thereby disrupting TLR3 signaling and preventing the establishment of an antiviral state. Functionally, peptide cofactor which forms a non-covalent complex with the N-terminal of NS3 serine protease. The NS3/NS4A complex prevents phosphorylation of host IRF3, thus preventing the establishment of dsRNA induced antiviral state. The NS3/NS4A complex induces host amino acid transporter component SLC3A2, thus contributing to HCV propagation. In terms of biological role, induces a specific membrane alteration that serves as a scaffold for the virus replication complex. This membrane alteration gives rise to the so-called ER-derived membranous web that contains the replication complex. NS4B self-interaction contributes to its function in membranous web formation. Promotes host TRIF protein degradation in a CASP8-dependent manner thereby inhibiting host TLR3-mediated interferon signaling. Disrupts the interaction between STING and TBK1 contributing to the inhibition of interferon signaling. Phosphorylated protein that is indispensable for viral replication and assembly. Both hypo- and hyperphosphorylated states are required for the viral life cycle. The hyperphosphorylated form of NS5A is an inhibitor of viral replication. Involved in RNA-binding and especially in binding to the viral genome. Zinc is essential for RNA-binding. Participates in the viral particle production as a result of its interaction with the viral mature core protein. Its interaction with host VAPB may target the viral replication complex to vesicles. Down-regulates viral IRES translation initiation. Mediates interferon resistance, presumably by interacting with and inhibiting host EIF2AK2/PKR. Prevents BIN1-induced apoptosis. Acts as a transcriptional activator of some host genes important for viral replication when localized in the nucleus. Via the interaction with host PACSIN2, modulates lipid droplet formation in order to promote virion assembly. Modulates TNFRSF21/DR6 signaling pathway for viral propagation. Its function is as follows. RNA-dependent RNA polymerase that performs primer-template recognition and RNA synthesis during viral replication. Initiates RNA transcription/replication at a flavin adenine dinucleotide (FAD), resulting in a 5'- FAD cap on viral RNAs. In this way, recognition of viral 5' RNA by host pattern recognition receptors can be bypassed, thereby evading activation of antiviral pathways. The protein is Genome polyprotein of Homo sapiens (Human).